We begin with the raw amino-acid sequence, 179 residues long: Signal peptidase complex catalytic subunit SEC11A (179 aa).

Topologically, residues 1–16 (MLSLDFLDDVRRMNKR) are cytoplasmic. The chain crosses the membrane as a helical; Signal-anchor for type II membrane protein span at residues 17–36 (QLYYQVLNFGMIVSSALMIW). The Lumenal segment spans residues 37–179 (KGLMVITGSE…LGLFVLVHRE (143 aa)). Catalysis depends on charge relay system residues Ser-56, His-96, and Asp-122. A C-terminal short (CTS) helix region spans residues 165–176 (AVLFLLGLFVLV).

Belongs to the peptidase S26B family. Component of the signal peptidase complex paralog A (SPC-A) composed of a catalytic subunit SEC11A and three accessory subunits SPCS1, SPCS2 and SPCS3. Within the complex, interacts with SPCS2 and SPCS3. The complex induces a local thinning of the ER membrane which is used to measure the length of the signal peptide (SP) h-region of protein substrates. This ensures the selectivity of the complex towards h-regions shorter than 18-20 amino acids.

Its subcellular location is the endoplasmic reticulum membrane. It catalyses the reaction Cleavage of hydrophobic, N-terminal signal or leader sequences from secreted and periplasmic proteins.. Catalytic component of the signal peptidase complex (SPC) which catalyzes the cleavage of N-terminal signal sequences from nascent proteins as they are translocated into the lumen of the endoplasmic reticulum. Specifically cleaves N-terminal signal peptides that contain a hydrophobic alpha-helix (h-region) shorter than 18-20 amino acids. This Bos taurus (Bovine) protein is Signal peptidase complex catalytic subunit SEC11A (SEC11A).